We begin with the raw amino-acid sequence, 377 residues long: Tyrosine-protein phosphatase 2 (377 aa).

In terms of domain architecture, Tyrosine-protein phosphatase spans 27-347 (IDKEFNFILQ…RFCYLAISEA (321 aa)). The interval 77–137 (IDDDDDDEDD…EDHGGSGDEG (61 aa)) is disordered. A compositionally biased stretch (acidic residues) spans 78–91 (DDDDDDEDDNEDDI). Residues 92–102 (IVSNNNNNNNN) are compositionally biased toward low complexity. The span at 113–123 (GSSGQSDVMSN) shows a compositional bias: polar residues. The Phosphocysteine intermediate role is filled by C281.

The protein belongs to the protein-tyrosine phosphatase family. Non-receptor class subfamily.

It catalyses the reaction O-phospho-L-tyrosyl-[protein] + H2O = L-tyrosyl-[protein] + phosphate. The polypeptide is Tyrosine-protein phosphatase 2 (ptpB) (Dictyostelium discoideum (Social amoeba)).